We begin with the raw amino-acid sequence, 346 residues long: UDP-N-acetylenolpyruvoylglucosamine reductase (346 aa).

One can recognise an FAD-binding PCMH-type domain in the interval 18–189 (LHAQARAFIA…VSVVFALKTH (172 aa)). Residue Arg-165 is part of the active site. The Proton donor role is filled by Ser-240. Glu-336 is a catalytic residue.

The protein belongs to the MurB family. The cofactor is FAD.

Its subcellular location is the cytoplasm. It carries out the reaction UDP-N-acetyl-alpha-D-muramate + NADP(+) = UDP-N-acetyl-3-O-(1-carboxyvinyl)-alpha-D-glucosamine + NADPH + H(+). The protein operates within cell wall biogenesis; peptidoglycan biosynthesis. Its function is as follows. Cell wall formation. The protein is UDP-N-acetylenolpyruvoylglucosamine reductase of Neisseria gonorrhoeae (strain ATCC 700825 / FA 1090).